Consider the following 344-residue polypeptide: tRNA(Ile)-lysidine synthase (344 aa).

Residue 43–48 (SGGADS) coordinates ATP.

This sequence belongs to the tRNA(Ile)-lysidine synthase family.

Its subcellular location is the cytoplasm. The catalysed reaction is cytidine(34) in tRNA(Ile2) + L-lysine + ATP = lysidine(34) in tRNA(Ile2) + AMP + diphosphate + H(+). Its function is as follows. Ligates lysine onto the cytidine present at position 34 of the AUA codon-specific tRNA(Ile) that contains the anticodon CAU, in an ATP-dependent manner. Cytidine is converted to lysidine, thus changing the amino acid specificity of the tRNA from methionine to isoleucine. The sequence is that of tRNA(Ile)-lysidine synthase from Bordetella parapertussis (strain 12822 / ATCC BAA-587 / NCTC 13253).